The chain runs to 2957 residues: Toxin PAU_02230 (2957 aa).

Residues 949–968 are disordered; that stretch reads TSVSPAETAQSTPEPLSDFA. The tract at residues 2115 to 2144 is membrane localization domain that interacts with the inner leaflet of the plasma membrane; that stretch reads EWFKHSETGLKGGGPIDDIRKYIARKSAIK. A tyrosine glycosyltransferase PaToxG region spans residues 2115-2449; it reads EWFKHSETGL…TSTIVTPLAP (335 aa). UDP-N-acetyl-alpha-D-glucosamine is bound by residues 2169-2171 and 2259-2260; these read IWI and SD. Positions 2276 and 2278 each coordinate a divalent metal cation. A DxDD motif motif is present at residues 2276 to 2279; it reads DIDD. Residue asparagine 2312 coordinates UDP-N-acetyl-alpha-D-glucosamine. Residues 2450-2672 are sseI-like deamidase PaToxD; the sequence is KTEMLPPVPS…NYSVNPTAEN (223 aa). Catalysis depends on for deamidase activity residues cysteine 2509, histidine 2547, and aspartate 2562. The disordered stretch occupies residues 2667 to 2705; sequence NPTAENLSPPPPPPIPSHGQVPKTVTPPPPPMRSPLSLS.

A divalent metal cation serves as cofactor.

The protein resides in the secreted. Its subcellular location is the host cell membrane. It carries out the reaction L-tyrosyl-[protein] + UDP-N-acetyl-alpha-D-glucosamine = O-(N-acetyl-alpha-D-glucosaminyl)-L-tyrosyl-[protein] + UDP + H(+). The catalysed reaction is L-glutaminyl-[protein] + H2O = L-glutamyl-[protein] + NH4(+). Toxin that acts on host cells by modifying Rho proteins by tyrosine GlcNAcylation and heterotrimeric G alpha proteins by deamidation. Catalyzes the mono-O-GlcNAcylation of small GTPases of the Rho family (RhoA, RhoB, RhoC, Rac1, Rac2, Rac3, Cdc42) in eukaryotic host cells at the conserved tyrosine residue located in the switch I region (Tyr-32/34), using UDP-N-acetylglucosamine (UDP-GlcNAc) as the sugar donor; other GTPases of the Rho, Ras or Rab families are not substrates. Tyrosine glycosylation inhibits Rho activation and prevents interaction with downstream effectors, resulting in actin disassembly, inhibition of phagocytosis, cell rounding, and toxicity toward insects and mammalian cells. Also catalyzes the deamidation of the catalytic glutamine in heterotrimeric G alpha proteins (Gi, Gq/11), which blocks GTP hydrolysis and arrests the G proteins in a permanent active state leading to activation of Rho GTPases. Thus, PaTox hijacks host GTPase signaling in a bidirectional manner by deamidation-induced activation and glycosylation-induced inactivation of GTPases. The sequence is that of Toxin PAU_02230 from Photorhabdus asymbiotica subsp. asymbiotica (strain ATCC 43949 / 3105-77) (Xenorhabdus luminescens (strain 2)).